The following is a 268-amino-acid chain: Phosphatidylglycerol--prolipoprotein diacylglyceryl transferase (268 aa).

The next 7 helical transmembrane spans lie at 14–34 (IIFSLGPISLRWYGLMYLIGF), 60–80 (LLFNGFAGVFLGGRIGYVLFY), 95–115 (VWEGGMSFHGGLIGVIVAMLV), 124–144 (FWVVADFVAPLIPFGLGMGRI), 176–196 (SQLYEFVLEGIVLFCILNWFI), 203–223 (GSVAGLFLLFYGLFRFIVEFF), and 238–258 (ISMGQILSTPMILLGALFIVL). Arg143 is a binding site for a 1,2-diacyl-sn-glycero-3-phospho-(1'-sn-glycerol).

The protein belongs to the Lgt family.

It is found in the cell inner membrane. The catalysed reaction is L-cysteinyl-[prolipoprotein] + a 1,2-diacyl-sn-glycero-3-phospho-(1'-sn-glycerol) = an S-1,2-diacyl-sn-glyceryl-L-cysteinyl-[prolipoprotein] + sn-glycerol 1-phosphate + H(+). The protein operates within protein modification; lipoprotein biosynthesis (diacylglyceryl transfer). Functionally, catalyzes the transfer of the diacylglyceryl group from phosphatidylglycerol to the sulfhydryl group of the N-terminal cysteine of a prolipoprotein, the first step in the formation of mature lipoproteins. The protein is Phosphatidylglycerol--prolipoprotein diacylglyceryl transferase of Mannheimia succiniciproducens (strain KCTC 0769BP / MBEL55E).